The primary structure comprises 139 residues: Non-structural protein 1 (139 aa).

The short motif at aspartate 136–serine 139 is the DLNP; interaction with MAP1B element.

It belongs to the pneumovirus non-structural protein 1 family. As to quaternary structure, monomer. Homomultimer. Heteromultimer with NS2. Interacts with the matrix protein M. Interacts with host ELOC and CUL2; this interaction allows NS1 to form an active E3 ligase with ELOC and CUL2. Interacts with host IRF3; this interaction leads to the disrupted association of IRF3 with CREBBP and thus reduced binding of IRF3 to the IFN-beta promoter. Interacts with host MAVS; this interaction prevents MAVS binding to RIGI and inhibits signaling pathway leading to interferon production. Interacts with host MAP1B/microtubule-associated protein 1B. Interacts with host TRIM25 (via SPRY domain); this interaction suppresses RIGI ubiquitination and results in decreased interaction between RIGI and MAVS.

It localises to the host cytoplasm. The protein resides in the host mitochondrion. Its subcellular location is the host nucleus. Plays a major role in antagonizing the type I IFN-mediated antiviral response by degrading or inhibiting multiple cellular factors required for either IFN induction or response pathways. Acts cooperatively with NS2 to repress activation and nuclear translocation of host IFN-regulatory factor IRF3. Also disrupts the association of IRF3 with CREBBP. Interacts with host mitochondrial-associated membrane (MAM) MAVS and prevents the interaction with RIGI. Interacts with TRIM25 to suppress TRIM25-mediated RIGI ubiquitination and thereby RIGI-MAVS interaction. Together with NS2, participates in the proteasomal degradation of host STAT2, IRF3, IRF7, TBK1 and RIGI through a NS-degradasome involving CUL2 and Elongin-C. The degradasome requires an intact mitochondrial MAVS. Decreases the levels of host TRAF3 and IKBKE/IKK-epsilon. As functions other than disruptions of the type I IFN-mediated antiviral signaling pathways, induces host SOCS1 and SOCS3 expression. Suppresses premature apoptosis by an NF-kappa-B-dependent, interferon-independent mechanism and thus facilitates virus growth. Additionally, NS1 may serve some inhibitory role in viral transcription and RNA replication. Suppresses proliferation and activation of host CD103+ CD8+ cytotoxic T-lymphocytes and Th17 helper T-lymphocytes. The chain is Non-structural protein 1 (1C) from Human respiratory syncytial virus B (strain 18537).